A 220-amino-acid polypeptide reads, in one-letter code: uncharacterized protein (220 aa).

Residues phenylalanine 20 to isoleucine 42 form a helical membrane-spanning segment.

It is found in the membrane. This is an uncharacterized protein from Rickettsia prowazekii (strain Madrid E).